Here is a 903-residue protein sequence, read N- to C-terminus: Calcium-activated chloride channel regulator 1 (903 aa).

The signal sequence occupies residues Met-1–Ser-21. A metalloprotease domain region spans residues Asp-45 to Lys-199. His-155 provides a ligand contact to Zn(2+). Residue Glu-156 is part of the active site. Residues His-159 and Asp-166 each contribute to the Zn(2+) site. The 169-residue stretch at Val-308–Ile-476 folds into the VWFA domain. Residues Asn-360, Asn-372, Asn-504, and Asn-842 are each glycosylated (N-linked (GlcNAc...) asparagine). The chain crosses the membrane as a helical span at residues Gly-883–Val-903.

It belongs to the CLCR family. Glycosylated. Post-translationally, the 125-kDa product is autoproteolytically processed by the metalloprotease domain and yields to two cell-surface-associated subunits, a 90-kDa protein and a group of 37- to 41-kDa proteins. The cleavage is necessary for calcium-activated chloride channel (CaCC) activation activity. As to expression, trachea.

Its subcellular location is the apical cell membrane. May be involved in mediating calcium-activated chloride conductance. May play critical roles in goblet cell metaplasia, mucus hypersecretion, cystic fibrosis and AHR. May be involved in the regulation of mucus production and/or secretion by goblet cells. Involved in the regulation of tissue inflammation in the innate immune response. May play a role as a tumor suppressor. Induces MUC5AC. In Bos taurus (Bovine), this protein is Calcium-activated chloride channel regulator 1.